Consider the following 201-residue polypeptide: MSKVLVVKSSILATFSQSNPLADHFIDQWREQHLNDDITVRDLGAQPVPELDGELVGALRPSDATLTQRQQQALELSDALIGELQANDVLVFTAPMYNFAIPSKLKNYFDLIARASVTFRYSEQGPERLVKNKRALILTTRDGIHKDTSSDLVTHYLRLFLGFIGITDVSFIYAEGVAYGPEAAVKAQEEAKASIQSFVSA.

Residues Ser-10, 16–18 (SQS), and 96–99 (MYNF) contribute to the FMN site.

This sequence belongs to the azoreductase type 1 family. In terms of assembly, homodimer. The cofactor is FMN.

It carries out the reaction 2 a quinone + NADH + H(+) = 2 a 1,4-benzosemiquinone + NAD(+). It catalyses the reaction N,N-dimethyl-1,4-phenylenediamine + anthranilate + 2 NAD(+) = 2-(4-dimethylaminophenyl)diazenylbenzoate + 2 NADH + 2 H(+). Quinone reductase that provides resistance to thiol-specific stress caused by electrophilic quinones. Its function is as follows. Also exhibits azoreductase activity. Catalyzes the reductive cleavage of the azo bond in aromatic azo compounds to the corresponding amines. This is FMN-dependent NADH:quinone oxidoreductase from Sodalis glossinidius (strain morsitans).